The sequence spans 407 residues: Transcriptional regulator ICP22 homolog (407 aa).

Residues 34-268 (RKRRRKLKPQ…STQPGGVPKL (235 aa)) are disordered. Residues 81-241 (EREGEGGEEG…EEAEEEEEEA (161 aa)) show a composition bias toward acidic residues.

It belongs to the herpesviridae ICP22 family.

This Saimiriine herpesvirus 2 (strain 11) (SaHV-2) protein is Transcriptional regulator ICP22 homolog (73).